Consider the following 128-residue polypeptide: Holo-[acyl-carrier-protein] synthase (128 aa).

Mg(2+) contacts are provided by Asp-9 and Glu-56.

Belongs to the P-Pant transferase superfamily. AcpS family. Mg(2+) is required as a cofactor.

It localises to the cytoplasm. The catalysed reaction is apo-[ACP] + CoA = holo-[ACP] + adenosine 3',5'-bisphosphate + H(+). Its function is as follows. Transfers the 4'-phosphopantetheine moiety from coenzyme A to a Ser of acyl-carrier-protein. In Pelagibacter ubique (strain HTCC1062), this protein is Holo-[acyl-carrier-protein] synthase.